The following is a 95-amino-acid chain: Cystatin-A2 (95 aa).

The Secondary area of contact signature appears at Q47–G51.

Belongs to the cystatin family.

The protein localises to the cytoplasm. Intracellular thiol proteinase inhibitor. Inhibits cathepsin B, but not papain. The protein is Cystatin-A2 (cpiB) of Dictyostelium discoideum (Social amoeba).